We begin with the raw amino-acid sequence, 293 residues long: Group 3 late-embryogenesis abundant protein, mitochondrial (293 aa).

A mitochondrion-targeting transit peptide spans 1-31; that stretch reads MFLARNAGRAGYRGVVAYQQAASFSVSSAKA. Over residues 27 to 43 the composition is skewed to low complexity; that stretch reads SSAKAAGSRSSGGSDAG. The disordered stretch occupies residues 27–52; that stretch reads SSAKAAGSRSSGGSDAGDYAREAAEH. LEA 11-mer repeat repeat units follow at residues 58-68, 83-93, 123-133, 134-144, 145-155, 160-170, 171-181, 199-209, and 210-220; these read KDLKNEASWKA, KDTVKEGVHDM, KNAAQDTAATL, KDKAGSAWNQA, KHVVEDKGEDV, KDTASKVWGKA, KHVAEDVKENA, KDKAADVLSGA, and KHTAENLAHKA. The disordered stretch occupies residues 217–293; sequence AHKAQAAIHD…KGPGQAGGRR (77 aa). Low complexity predominate over residues 230–265; that stretch reads SSGSQSQSQSQSQYRQGQQQGRQDQQQSKSQWGQTS. The span at 279–293 shows a compositional bias: gly residues; it reads GPQGGKGPGQAGGRR.

Belongs to the LEA type 4 family.

The protein resides in the mitochondrion. Its function is as follows. Mitochondrial heat soluble protein acting as a molecular shield in water-deficient condition. The chain is Group 3 late-embryogenesis abundant protein, mitochondrial from Ramazzottius varieornatus (Water bear).